Consider the following 84-residue polypeptide: Sulfur carrier protein TusA (84 aa).

C19 acts as the Cysteine persulfide intermediate in catalysis.

Belongs to the sulfur carrier protein TusA family. In terms of assembly, interacts with IscS.

It localises to the cytoplasm. Its pathway is tRNA modification. In terms of biological role, sulfur carrier protein involved in sulfur trafficking in the cell. Part of a sulfur-relay system required for 2-thiolation during synthesis of 2-thiouridine of the modified wobble base 5-methylaminomethyl-2-thiouridine (mnm(5)s(2)U) in tRNA. Interacts with IscS and stimulates its cysteine desulfurase activity. Accepts an activated sulfur from IscS, which is then transferred to TusD, and thus determines the direction of sulfur flow from IscS to 2-thiouridine formation. Also appears to be involved in sulfur transfer for the biosynthesis of molybdopterin. The sequence is that of Sulfur carrier protein TusA from Proteus mirabilis (strain HI4320).